The primary structure comprises 138 residues: Small ribosomal subunit protein uS11c (138 aa).

The disordered stretch occupies residues 1 to 22 (MAKLLPRIGSRKNGRISSRKNA). A compositionally biased stretch (basic residues) spans 9–22 (GSRKNGRISSRKNA).

Belongs to the universal ribosomal protein uS11 family. In terms of assembly, part of the 30S ribosomal subunit.

The protein resides in the plastid. It localises to the chloroplast. The sequence is that of Small ribosomal subunit protein uS11c from Populus alba (White poplar).